Here is a 38-residue protein sequence, read N- to C-terminus: Allatostatin-C (38 aa).

Residues 1 to 19 constitute a propeptide that is removed on maturation; sequence MRRALDGPGSSSLDTRQAD. Gln22 carries the pyrrolidone carboxylic acid; partial modification.

It belongs to the allatostatin family. In terms of tissue distribution, in its non-pyroglutamate form, expressed in antennal lobe (AL), corpora cardiaca (CC), corpora allata (CA) and gnathal ganglion (GNG) with expression in AL detected in most animals and expression in CC, CA and GNG detected in few animals (at protein level). In its pyroglutamate form, expressed in antennal lobe (AL), corpora cardiaca (CC) and corpora allata (CA) with expression detected in few animals (at protein level). Not expressed in GNG (protein level).

Its subcellular location is the secreted. Its function is as follows. Strongly inhibits juvenile hormone biosynthesis. The chain is Allatostatin-C from Agrotis ipsilon (Black cutworm moth).